We begin with the raw amino-acid sequence, 159 residues long: Phosphopantetheine adenylyltransferase (159 aa).

Position 10 (T10) interacts with substrate. Residues 10-11 (TF) and H18 contribute to the ATP site. Substrate-binding residues include K42, M74, and R88. ATP contacts are provided by residues 89 to 91 (GLR), E99, and 124 to 130 (WSFISSS).

Belongs to the bacterial CoaD family. In terms of assembly, homohexamer. Mg(2+) is required as a cofactor.

It is found in the cytoplasm. It catalyses the reaction (R)-4'-phosphopantetheine + ATP + H(+) = 3'-dephospho-CoA + diphosphate. Its pathway is cofactor biosynthesis; coenzyme A biosynthesis; CoA from (R)-pantothenate: step 4/5. In terms of biological role, reversibly transfers an adenylyl group from ATP to 4'-phosphopantetheine, yielding dephospho-CoA (dPCoA) and pyrophosphate. This chain is Phosphopantetheine adenylyltransferase, found in Klebsiella pneumoniae (strain 342).